Here is a 208-residue protein sequence, read N- to C-terminus: Small ribosomal subunit protein uS4 (208 aa).

The S4 RNA-binding domain occupies 98–159; that stretch reads RRLDNVVYRL…KSRKIVSIND (62 aa).

The protein belongs to the universal ribosomal protein uS4 family. As to quaternary structure, part of the 30S ribosomal subunit. Contacts protein S5. The interaction surface between S4 and S5 is involved in control of translational fidelity.

Functionally, one of the primary rRNA binding proteins, it binds directly to 16S rRNA where it nucleates assembly of the body of the 30S subunit. In terms of biological role, with S5 and S12 plays an important role in translational accuracy. The polypeptide is Small ribosomal subunit protein uS4 (Pelobacter propionicus (strain DSM 2379 / NBRC 103807 / OttBd1)).